Reading from the N-terminus, the 338-residue chain is Adenylosuccinate synthetase (338 aa).

GTP contacts are provided by residues 12 to 18 and 42 to 44; these read GDEGKGK and GHT. The Proton acceptor role is filled by Asp-13. The Mg(2+) site is built by Asp-13 and Gly-42. Residues 13–16, 40–43, Thr-127, Arg-141, Gln-179, Thr-194, and Arg-256 each bind IMP; these read DEGK and NAGH. His-43 serves as the catalytic Proton donor. 252–258 is a substrate binding site; sequence TVTGRRR. GTP-binding positions include Arg-258, 284–286, and 324–326; these read CLD and STG.

The protein belongs to the adenylosuccinate synthetase family. Homodimer. Mg(2+) is required as a cofactor.

It is found in the cytoplasm. The catalysed reaction is IMP + L-aspartate + GTP = N(6)-(1,2-dicarboxyethyl)-AMP + GDP + phosphate + 2 H(+). It functions in the pathway purine metabolism; AMP biosynthesis via de novo pathway; AMP from IMP: step 1/2. Plays an important role in the de novo pathway of purine nucleotide biosynthesis. Catalyzes the first committed step in the biosynthesis of AMP from IMP. The protein is Adenylosuccinate synthetase of Methanococcus maripaludis (strain C7 / ATCC BAA-1331).